The following is a 260-amino-acid chain: Adenosylcobinamide-GDP ribazoletransferase (260 aa).

7 consecutive transmembrane segments (helical) span residues 42–62 (PLAG…ANAI), 64–84 (LPPL…TGAL), 117–137 (FAAL…MAII), 144–164 (YALL…LAFW), 192–212 (GLGL…VALI), 214–234 (ALVL…AKIG), and 240–260 (TLGA…VMAL).

It belongs to the CobS family. Mg(2+) is required as a cofactor.

The protein localises to the cell inner membrane. It catalyses the reaction alpha-ribazole + adenosylcob(III)inamide-GDP = adenosylcob(III)alamin + GMP + H(+). The enzyme catalyses alpha-ribazole 5'-phosphate + adenosylcob(III)inamide-GDP = adenosylcob(III)alamin 5'-phosphate + GMP + H(+). Its pathway is cofactor biosynthesis; adenosylcobalamin biosynthesis; adenosylcobalamin from cob(II)yrinate a,c-diamide: step 7/7. In terms of biological role, joins adenosylcobinamide-GDP and alpha-ribazole to generate adenosylcobalamin (Ado-cobalamin). Also synthesizes adenosylcobalamin 5'-phosphate from adenosylcobinamide-GDP and alpha-ribazole 5'-phosphate. The sequence is that of Adenosylcobinamide-GDP ribazoletransferase from Brucella ovis (strain ATCC 25840 / 63/290 / NCTC 10512).